The chain runs to 184 residues: ATP-dependent protease subunit HslV (184 aa).

Residue T12 is part of the active site. G167, C170, and T173 together coordinate Na(+).

The protein belongs to the peptidase T1B family. HslV subfamily. A double ring-shaped homohexamer of HslV is capped on each side by a ring-shaped HslU homohexamer. The assembly of the HslU/HslV complex is dependent on binding of ATP.

It localises to the cytoplasm. It carries out the reaction ATP-dependent cleavage of peptide bonds with broad specificity.. With respect to regulation, allosterically activated by HslU binding. Protease subunit of a proteasome-like degradation complex believed to be a general protein degrading machinery. This is ATP-dependent protease subunit HslV from Wolbachia sp. subsp. Drosophila simulans (strain wRi).